The primary structure comprises 187 residues: Threonylcarbamoyl-AMP synthase (187 aa).

The YrdC-like domain occupies 4–187 (TPDLDAAVAT…DARTGQILRD (184 aa)).

It belongs to the SUA5 family. TsaC subfamily.

It localises to the cytoplasm. It carries out the reaction L-threonine + hydrogencarbonate + ATP = L-threonylcarbamoyladenylate + diphosphate + H2O. Its function is as follows. Required for the formation of a threonylcarbamoyl group on adenosine at position 37 (t(6)A37) in tRNAs that read codons beginning with adenine. Catalyzes the conversion of L-threonine, HCO(3)(-)/CO(2) and ATP to give threonylcarbamoyl-AMP (TC-AMP) as the acyladenylate intermediate, with the release of diphosphate. In Xanthomonas campestris pv. campestris (strain 8004), this protein is Threonylcarbamoyl-AMP synthase.